Reading from the N-terminus, the 189-residue chain is Recombination protein RecR (189 aa).

The C4-type zinc finger occupies 48–63 (CQTCFHLSAEPTCEIC). The 95-residue stretch at 71-165 (GMLCVVADSR…EVSRIAYGLP (95 aa)) folds into the Toprim domain.

It belongs to the RecR family.

In terms of biological role, may play a role in DNA repair. It seems to be involved in an RecBC-independent recombinational process of DNA repair. It may act with RecF and RecO. The protein is Recombination protein RecR of Synechococcus sp. (strain CC9311).